The following is a 441-amino-acid chain: C4-dicarboxylate transport protein (441 aa).

At 1 to 30 the chain is on the cytoplasmic side; sequence MIIEHSAEVRGKTPLYRHLYVQVLAAIAAG. Residues 31–49 traverse the membrane as a helical segment; it reads ILLGHFYPDIGTELKPLGD. Residues 50 to 68 are Periplasmic-facing; that stretch reads AFIRLVKMIIAPVIFLTVA. A helical transmembrane segment spans residues 69–87; it reads TGIAGMTDLAKVGRVAGKA. The Cytoplasmic portion of the chain corresponds to 88–99; that stretch reads MIYFLAFSTLAL. Residues 100-118 traverse the membrane as a helical segment; the sequence is VVGLVVANVVQPGAGMHID. Residues 119–149 are Periplasmic-facing; that stretch reads PASLDAKAVATYAEKAHEQSITGFLMNIIPT. A helical transmembrane segment spans residues 150 to 168; that stretch reads TLVGAFAEGDILQVLFISV. Over 169–171 the chain is Cytoplasmic; the sequence is LFG. Residues 172 to 190 form a helical membrane-spanning segment; sequence ISLAIVGKKAEPVVDFLQA. The Periplasmic portion of the chain corresponds to 191 to 209; it reads LTLPIFRLVAILMKAAPIG. The helical transmembrane segment at 210-228 threads the bilayer; the sequence is AFGAMAFTIGKYGIASIAN. Over 229-241 the chain is Cytoplasmic; sequence LAMLIGTFYLTSF. The chain crosses the membrane as a helical span at residues 242–260; the sequence is LFVFIVLGAVARYNGFSIL. Residues 261 to 281 are Periplasmic-facing; that stretch reads SLIRYIKEELLLVLGTSSSEA. The chain crosses the membrane as a helical span at residues 282–300; sequence ALPGLMNKMEKAGCKRSVV. Over 301-320 the chain is Cytoplasmic; that stretch reads GLVIPTGYSFNLDGTNIYMT. A helical membrane pass occupies residues 321–339; sequence LAALFIAQATDTPLSYGDQ. Over 340 to 350 the chain is Periplasmic; the sequence is ILLLLVAMLSS. The helical transmembrane segment at 351 to 369 threads the bilayer; it reads KGAAGITGAGFITLAATLS. Residues 370-378 lie on the Cytoplasmic side of the membrane; that stretch reads VVPSVPVAG. Residues 379–398 traverse the membrane as a helical segment; that stretch reads MALILGIDRFMSECRALTNF. At 399 to 405 the chain is on the periplasmic side; that stretch reads VGNAVAT. Residues 406 to 424 traverse the membrane as a helical segment; the sequence is IVVAKWEGELDQAQLSAAL. The Cytoplasmic segment spans residues 425-441; that stretch reads GGEASVEAIPAVVQPAE.

It belongs to the dicarboxylate/amino acid:cation symporter (DAACS) (TC 2.A.23) family.

The protein localises to the cell inner membrane. Its function is as follows. Responsible for the transport of dicarboxylates such as succinate, fumarate, and malate from the periplasm across the inner membrane. This transport system plays an important role in the energy supply of rhizobium-legume symbionts. The protein is C4-dicarboxylate transport protein (dctA) of Rhizobium meliloti (strain 1021) (Ensifer meliloti).